Reading from the N-terminus, the 832-residue chain is Serine/threonine-protein kinase Doa (832 aa).

4 disordered regions span residues 1–86 (MVAA…SKYI), 135–158 (LLQH…QQYP), 179–215 (SDPF…KQAP), and 258–419 (SKIG…QLQQ). Positions 8–18 (VPTSSSSSAAT) are enriched in polar residues. Over residues 20–32 (RQKDVDNKLEKCL) the composition is skewed to basic and acidic residues. Composition is skewed to low complexity over residues 40–53 (TSSN…SNNN), 137–158 (QHQQ…QQYP), and 183–203 (MQQQ…KLQQ). Residues 271 to 282 (HSASFSSAQRPT) are compositionally biased toward polar residues. 3 stretches are compositionally biased toward low complexity: residues 285–310 (QFHQ…QHQH), 347–365 (QMQP…TQFQ), and 396–419 (SSSS…QLQQ). Residues 479 to 799 (YKIMATLGEG…LGEALHHPFF (321 aa)) form the Protein kinase domain. ATP contacts are provided by residues 485 to 493 (LGEGTFGRV) and Lys-508. Catalysis depends on Asp-605, which acts as the Proton acceptor. Positions 809 to 832 (GEVSNKQPLSSGSSSRERSHSLSR) are disordered. Residues 823 to 832 (SRERSHSLSR) show a composition bias toward basic and acidic residues.

The protein belongs to the protein kinase superfamily. CMGC Ser/Thr protein kinase family. Lammer subfamily. In terms of assembly, interacts (via N-terminus) with x16 (via Arg/Ser-rich region). Interacts with eEF1gamma (via C-terminus); the interaction is probably direct, is transient and leads to phosphorylation of eEF1gamma by Doa. Requires Mg(2+) as cofactor. Autophosphorylated on serine, threonine and tyrosine residues. In terms of tissue distribution, ubiquitous expression in embryos. Stage 17 embryos show elevated expression in CNS and brain. Ubiquitous expression in larval imaginal disks. Increased expression posterior to the eye-antennal disk morphogenetic furrow.

Its subcellular location is the cytoplasm. The protein localises to the cytosol. It is found in the nucleus. It catalyses the reaction L-seryl-[protein] + ATP = O-phospho-L-seryl-[protein] + ADP + H(+). It carries out the reaction L-threonyl-[protein] + ATP = O-phospho-L-threonyl-[protein] + ADP + H(+). The catalysed reaction is L-tyrosyl-[protein] + ATP = O-phospho-L-tyrosyl-[protein] + ADP + H(+). In terms of biological role, dual specificity kinase involved in the negative regulation of microtubule-based transport through phsophorylation of the microtuble-binding protein eEF1gamma. May function in the control of alternative splicing by phosphorylating serine/arginine-rich splicing factors, the SR proteins, including x16. Negative regulator of the copia retrotransposon element of the white (w) gene. In the eye, it is required for normal pigmentation, photoreceptor cell development and for organization of interommatidial bristles. Also essential for embryonic segmentation and differentiation of the nervous system. Its function is as follows. May be the specific isoform involved in regulation of microtubule-based transport through phosphorylation of the microtubule binding protein eEF1gamma. The protein is Serine/threonine-protein kinase Doa of Drosophila melanogaster (Fruit fly).